We begin with the raw amino-acid sequence, 607 residues long: MDKQERYNRRENIRNFSIIAHIDHGKSTLADRILENTKSVETREMQDQLLDSMDLERERGITIKLNAVRLKYEAKDGETYTFHLIDTPGHVDFTYEVSRSLAACEGAILVVDAAQGIEAQTLANVYLALDNDLELLPVVNKIDLPAAEPDRVKQELEDVIGIDQEDVVLASAKSNIGIEEILEKIVDVVPAPDGDPEAPLKALIFDSEYDPYRGVISSIRIIDGVVKAGDRIKMMATGKEFEVTEVGINTPKQLPVEELTVGDVGYIIASIKNVDDSRVGDTITLAERPADKPLQGYKKMNPMVFCGLFPIDNKDYNDLREALEKLQLNDASLEFEPESSQALGFGYRTGFLGMLHMEIIQERIEREFGIELIATAPSVIYQCILKDGSEVSVDNPAQMPERDKIEHIYEPFVKATMMVPNDYVGAVMELCQRKRGQFINMDYLDDIRVNIVYEIPLSEVVFDFFDQLKSNTKGYASFDYEFIENKESNLVKMDILLNGDKVDALSFIVHRDFAYERGKALVEKLKTLIPRQQFEVPVQAAIGQKIVARTNIKSMGKNVLSKCYGGDISRKRKLLEKQKAGKAKMKAVGNVEIPQDAFLAVLKMDDE.

Residues 11 to 193 enclose the tr-type G domain; sequence ENIRNFSIIA…KIVDVVPAPD (183 aa). GTP contacts are provided by residues 23–28 and 140–143; these read DHGKST and NKID.

This sequence belongs to the TRAFAC class translation factor GTPase superfamily. Classic translation factor GTPase family. LepA subfamily.

It is found in the cell membrane. The enzyme catalyses GTP + H2O = GDP + phosphate + H(+). Required for accurate and efficient protein synthesis under certain stress conditions. May act as a fidelity factor of the translation reaction, by catalyzing a one-codon backward translocation of tRNAs on improperly translocated ribosomes. Back-translocation proceeds from a post-translocation (POST) complex to a pre-translocation (PRE) complex, thus giving elongation factor G a second chance to translocate the tRNAs correctly. Binds to ribosomes in a GTP-dependent manner. The chain is Elongation factor 4 from Staphylococcus epidermidis (strain ATCC 35984 / DSM 28319 / BCRC 17069 / CCUG 31568 / BM 3577 / RP62A).